The following is a 336-amino-acid chain: Probable magnesium transporter NIPA2 (336 aa).

The Extracellular segment spans residues 1–7 (MEEMSPD). The chain crosses the membrane as a helical span at residues 8 to 28 (NIHGVILAVSSSIFIGSSFII). Over 29–55 (KKKGLKKAGVSGARAGEGGYGYLYEPW) the chain is Cytoplasmic. Residues 56–76 (WWAGMITMIVGEIANFAAYAF) form a helical membrane-spanning segment. Residues 77-79 (APA) are Extracellular-facing. A helical transmembrane segment spans residues 80–100 (ILVTPLGALSIIFSAVLAHFI). Residues 101–104 (LEEK) are Cytoplasmic-facing. The helical transmembrane segment at 105–125 (LHMFGILGCVLCVVGSTTIVL) threads the bilayer. At 126-145 (HAPHEQGIESVKQVWHLATE) the chain is on the extracellular side. A helical membrane pass occupies residues 146-166 (PGFLAYSAVVLVVVLALIFYY). At 167–179 (EPRYGKTHMIVYV) the chain is on the cytoplasmic side. Residues 180 to 200 (GICSLMGSLTVMSVKAVAIAI) traverse the membrane as a helical segment. Residues 201 to 212 (KLTFSGMNQFKY) are Extracellular-facing. Residues 213–233 (FHAWIFIIVVTICCILQINYL) traverse the membrane as a helical segment. The Cytoplasmic portion of the chain corresponds to 234-244 (NKALDNFNTAV). The helical transmembrane segment at 245–265 (ISPVYYVMFTTFTILASMIMF) threads the bilayer. Residues 266 to 272 (KDWASQS) lie on the Extracellular side of the membrane. The helical transmembrane segment at 273–293 (GLQIATELCGFVTILSGTFLL) threads the bilayer. Residues 294 to 336 (HKTKDMGNSTSLRGSTSHSPRDTPVFINSGSSRSSNSTRPAIL) lie on the Cytoplasmic side of the membrane. The disordered stretch occupies residues 303–336 (TSLRGSTSHSPRDTPVFINSGSSRSSNSTRPAIL). The segment covering 321-330 (NSGSSRSSNS) has biased composition (low complexity).

This sequence belongs to the NIPA (TC 2.A.7) family. In terms of assembly, homodimer.

It localises to the cell membrane. The protein localises to the early endosome. Functionally, acts as a Mg(2+) transporter. Can also transport other divalent cations such as Fe(2+), Sr(2+), Ba(2+), Mn(2+) and Co(2+) but to a much less extent than Mg(2+). This Arabidopsis thaliana (Mouse-ear cress) protein is Probable magnesium transporter NIPA2.